The sequence spans 718 residues: K(+)-insensitive pyrophosphate-energized proton pump (718 aa).

The next 6 helical transmembrane spans lie at 6-26 (AVLV…IWAI), 54-76 (LTRQ…WYLL), 81-103 (AIGF…HVSV), 112-132 (AASL…AITG), 133-153 (LLVA…LTVW), and 168-188 (VSLG…GGIF). Residue lysine 190 coordinates substrate. Mg(2+) is bound by residues aspartate 193, aspartate 197, asparagine 220, and aspartate 223. 6 helical membrane-spanning segments follow: residues 240 to 260 (AVTV…SDIL), 265 to 285 (LYPL…TFFV), 300 to 320 (GLIA…TLTV), 335 to 355 (GTNL…IVVI), 385 to 405 (GLAV…GGII), and 413 to 433 (LFGT…IVAL). Aspartate 441 provides a ligand contact to Mg(2+). 4 helical membrane passes run 472-492 (AVTK…LFAA), 524-544 (YVVA…GMAM), 593-613 (IIPS…VLLI), and 620-640 (AFAA…FVAI). The Ca(2+) site is built by aspartate 650, aspartate 682, and aspartate 686. Lysine 689 lines the substrate pocket. The chain crosses the membrane as a helical span at residues 695–715 (AVNPAIKITNIVALLLLAVLA).

It belongs to the H(+)-translocating pyrophosphatase (TC 3.A.10) family. K(+)-insensitive subfamily. In terms of assembly, homodimer. It depends on Mg(2+) as a cofactor.

The protein resides in the cell inner membrane. The catalysed reaction is diphosphate + H2O + H(+)(in) = 2 phosphate + 2 H(+)(out). Proton pump that utilizes the energy of pyrophosphate hydrolysis as the driving force for proton movement across the membrane. Generates a proton motive force. This Brucella anthropi (strain ATCC 49188 / DSM 6882 / CCUG 24695 / JCM 21032 / LMG 3331 / NBRC 15819 / NCTC 12168 / Alc 37) (Ochrobactrum anthropi) protein is K(+)-insensitive pyrophosphate-energized proton pump.